Consider the following 560-residue polypeptide: MSTENNAPVVNNFIRSIIDEDLATGRRSSVVTRFPPEPNGFAHIGHAKAICINFGLAEDYNGQCNLRMDDTNPEKESDEFVEAFKQDISWLGFKWNGEVRYASDYFDRLYDYAVELIQAGKAYVDDLSAEEMRQYRGNLTEPGKNSPYRDRTPEENLDLFTRMKNGEFPDGSKTLRLKIDMASGNINLRDPAIYRIRRVHHHRTGDKWCIYPMYDYTHCISDAIEGITHSLCSLEFEDHRPLYDWVLDNISIEHHPQQIEFSRLELLYALTSKRKLQALVNDGAVTGWDDPRMPTIAGMRRRGYSPAGIKLFAQRIGVSKSENIIDMAILEGAVRETLENDSPRVMAVVNPLKVTLTNYDAAVTASRSAPFHPHHPEFGERDVPIAREIWIERDDFAETPPPKWQRLTAGGEVRLRYSYVIKCDEVVKDAADEIVELKCSIDHDTLGKNPEGRKVKGVIHWVSAEHAIQADVRWYERLFTEQRPDAVRGEDGEYVDFRQFLNPESLKLVPAYVEASVLQAEPESRFQFERLGYFVTDRYEHRKGDKAVFNRTVGLKDSWK.

The 'HIGH' region motif lies at 36-46 (PEPNGFAHIGH). ATP-binding positions include 37–39 (EPN) and 43–49 (HIGHAKA). Positions 69 and 214 each coordinate L-glutamine. 263-264 (RL) lines the ATP pocket. The 'KMSKS' region signature appears at 270–274 (LTSKR).

Belongs to the class-I aminoacyl-tRNA synthetase family. Monomer.

It is found in the cytoplasm. The enzyme catalyses tRNA(Gln) + L-glutamine + ATP = L-glutaminyl-tRNA(Gln) + AMP + diphosphate. The polypeptide is Glutamine--tRNA ligase (Chromobacterium violaceum (strain ATCC 12472 / DSM 30191 / JCM 1249 / CCUG 213 / NBRC 12614 / NCIMB 9131 / NCTC 9757 / MK)).